The primary structure comprises 301 residues: Acetylglutamate kinase (301 aa).

Residues 72–73, Arg94, and Asn199 each bind substrate; that span reads GG.

Belongs to the acetylglutamate kinase family. ArgB subfamily.

It localises to the cytoplasm. It catalyses the reaction N-acetyl-L-glutamate + ATP = N-acetyl-L-glutamyl 5-phosphate + ADP. It participates in amino-acid biosynthesis; L-arginine biosynthesis; N(2)-acetyl-L-ornithine from L-glutamate: step 2/4. In terms of biological role, catalyzes the ATP-dependent phosphorylation of N-acetyl-L-glutamate. The chain is Acetylglutamate kinase from Bartonella henselae (strain ATCC 49882 / DSM 28221 / CCUG 30454 / Houston 1) (Rochalimaea henselae).